The following is a 553-amino-acid chain: Phenylalanine--tRNA ligase beta subunit (553 aa).

The B5 domain maps to F273–P349. Mg(2+) is bound by residues D327, D333, D336, and D337.

The protein belongs to the phenylalanyl-tRNA synthetase beta subunit family. Type 2 subfamily. Tetramer of two alpha and two beta subunits. Mg(2+) serves as cofactor.

It is found in the cytoplasm. The enzyme catalyses tRNA(Phe) + L-phenylalanine + ATP = L-phenylalanyl-tRNA(Phe) + AMP + diphosphate + H(+). The polypeptide is Phenylalanine--tRNA ligase beta subunit (Methanocella arvoryzae (strain DSM 22066 / NBRC 105507 / MRE50)).